Reading from the N-terminus, the 287-residue chain is Phosphatidylserine decarboxylase proenzyme (287 aa).

Active-site charge relay system; for autoendoproteolytic cleavage activity residues include Asp-89, His-146, and Ser-252. Catalysis depends on Ser-252, which acts as the Schiff-base intermediate with substrate; via pyruvic acid; for decarboxylase activity. At Ser-252 the chain carries Pyruvic acid (Ser); by autocatalysis.

It belongs to the phosphatidylserine decarboxylase family. PSD-B subfamily. Prokaryotic type I sub-subfamily. In terms of assembly, heterodimer of a large membrane-associated beta subunit and a small pyruvoyl-containing alpha subunit. Pyruvate is required as a cofactor. Post-translationally, is synthesized initially as an inactive proenzyme. Formation of the active enzyme involves a self-maturation process in which the active site pyruvoyl group is generated from an internal serine residue via an autocatalytic post-translational modification. Two non-identical subunits are generated from the proenzyme in this reaction, and the pyruvate is formed at the N-terminus of the alpha chain, which is derived from the carboxyl end of the proenzyme. The autoendoproteolytic cleavage occurs by a canonical serine protease mechanism, in which the side chain hydroxyl group of the serine supplies its oxygen atom to form the C-terminus of the beta chain, while the remainder of the serine residue undergoes an oxidative deamination to produce ammonia and the pyruvoyl prosthetic group on the alpha chain. During this reaction, the Ser that is part of the protease active site of the proenzyme becomes the pyruvoyl prosthetic group, which constitutes an essential element of the active site of the mature decarboxylase.

It localises to the cell membrane. It carries out the reaction a 1,2-diacyl-sn-glycero-3-phospho-L-serine + H(+) = a 1,2-diacyl-sn-glycero-3-phosphoethanolamine + CO2. Its pathway is phospholipid metabolism; phosphatidylethanolamine biosynthesis; phosphatidylethanolamine from CDP-diacylglycerol: step 2/2. Its function is as follows. Catalyzes the formation of phosphatidylethanolamine (PtdEtn) from phosphatidylserine (PtdSer). The sequence is that of Phosphatidylserine decarboxylase proenzyme from Shewanella woodyi (strain ATCC 51908 / MS32).